A 210-amino-acid chain; its full sequence is ATP-dependent Clp protease proteolytic subunit (210 aa).

The active-site Nucleophile is the serine 106. Residue histidine 131 is part of the active site.

The protein belongs to the peptidase S14 family. Fourteen ClpP subunits assemble into 2 heptameric rings which stack back to back to give a disk-like structure with a central cavity, resembling the structure of eukaryotic proteasomes.

It is found in the cytoplasm. It carries out the reaction Hydrolysis of proteins to small peptides in the presence of ATP and magnesium. alpha-casein is the usual test substrate. In the absence of ATP, only oligopeptides shorter than five residues are hydrolyzed (such as succinyl-Leu-Tyr-|-NHMec, and Leu-Tyr-Leu-|-Tyr-Trp, in which cleavage of the -Tyr-|-Leu- and -Tyr-|-Trp bonds also occurs).. Functionally, cleaves peptides in various proteins in a process that requires ATP hydrolysis. Has a chymotrypsin-like activity. Plays a major role in the degradation of misfolded proteins. In Bartonella henselae (strain ATCC 49882 / DSM 28221 / CCUG 30454 / Houston 1) (Rochalimaea henselae), this protein is ATP-dependent Clp protease proteolytic subunit.